A 501-amino-acid polypeptide reads, in one-letter code: MSNNRRNVRTPTKFDKNTKTIQIFGKTSIVLKNMSIQERIDEVTQLLKQLKMIRDEETNTQKALIMEHEEVVYNYESSEEGFPVEPKTEEKDIPSTSGQKRTYEFMKDDFWNSGEFDKYAEKRGFIKKDGGGYSKIPKEYKPIHQDENSSILNLDCIDNAPALFVSWTSKHGLELQLNKHFENFSDNEIWNYTQYYTRGSVQKFLSEQDYQTDVAPNLALVQGGPYAKFKYIVQTIYGEFIGKDIRDHSQDLINQEAEKARFHLANMIICDLCYFDNYTCEYRKYFYMLTPDERSTYIELFLQKLPAPFGRKMMEGFRKETAENKIANTLGGAIDIVRRTIDEECIQRSYRRTIGGAVKICCKGNPEIPQRYGCYDITKRKKTSKKKWKKRSYKPDLWKKKKRFFKRRDFSKKKKENPGKKKFCPTGKKSCKCWICHEEGHYANECPKKTKEKHKDKVKLLMEAEEEGFEPLESEASDIEEIFEIVEEDSESSSEEDEEQR.

The tract at residues Ser-78 to Gly-98 is disordered. The Nuclear localization signal signature appears at Lys-122 to Phe-125. Residues Cys-431–Lys-448 form a CCHC-type zinc finger.

This sequence belongs to the caulimoviridae capsid protein family. In terms of assembly, interacts (via nuclear localization signal) with host importin alpha.

The protein resides in the virion. It localises to the host nucleus. Functionally, self assembles to form an icosahedral capsid, about 50 nm in diameter, nm, composed of 420 subunits of the viral capsid protein. The capsid encapsulates the genomic dsDNA. Following virus entry into host cell, provides nuclear import of the viral genome. Virus particles do not enter the nucleus, but dock at the nuclear membrane through the interaction with host importins. The sequence is that of Capsid protein from Cestrum parqui (CmYLCV).